Here is a 245-residue protein sequence, read N- to C-terminus: Triosephosphate isomerase (245 aa).

Residue 9 to 11 participates in substrate binding; it reads NWK. His-92 functions as the Electrophile in the catalytic mechanism. Glu-164 acts as the Proton acceptor in catalysis. Residues Gly-170, Ser-209, and 230–231 contribute to the substrate site; that span reads GG.

This sequence belongs to the triosephosphate isomerase family. As to quaternary structure, homodimer.

It is found in the cytoplasm. The catalysed reaction is D-glyceraldehyde 3-phosphate = dihydroxyacetone phosphate. It participates in carbohydrate biosynthesis; gluconeogenesis. The protein operates within carbohydrate degradation; glycolysis; D-glyceraldehyde 3-phosphate from glycerone phosphate: step 1/1. Involved in the gluconeogenesis. Catalyzes stereospecifically the conversion of dihydroxyacetone phosphate (DHAP) to D-glyceraldehyde-3-phosphate (G3P). The sequence is that of Triosephosphate isomerase from Cupriavidus pinatubonensis (strain JMP 134 / LMG 1197) (Cupriavidus necator (strain JMP 134)).